The primary structure comprises 518 residues: 3-octaprenyl-4-hydroxybenzoate carboxy-lyase (518 aa).

Residue asparagine 177 participates in Mn(2+) binding. Residues 180-182 (IYR), 194-196 (RWL), and 199-200 (RG) contribute to the prenylated FMN site. Glutamate 243 is a binding site for Mn(2+). Aspartate 318 acts as the Proton donor in catalysis.

It belongs to the UbiD family. Homohexamer. It depends on prenylated FMN as a cofactor. Requires Mn(2+) as cofactor.

The protein resides in the cell membrane. It carries out the reaction a 4-hydroxy-3-(all-trans-polyprenyl)benzoate + H(+) = a 2-(all-trans-polyprenyl)phenol + CO2. It functions in the pathway cofactor biosynthesis; ubiquinone biosynthesis. Its function is as follows. Catalyzes the decarboxylation of 3-octaprenyl-4-hydroxy benzoate to 2-octaprenylphenol, an intermediate step in ubiquinone biosynthesis. This chain is 3-octaprenyl-4-hydroxybenzoate carboxy-lyase, found in Burkholderia lata (strain ATCC 17760 / DSM 23089 / LMG 22485 / NCIMB 9086 / R18194 / 383).